Consider the following 319-residue polypeptide: L-tryptophan isonitrile synthase AmbI1 (319 aa).

The protein belongs to the isocyanide synthase family.

It carries out the reaction D-ribulose 5-phosphate + L-tryptophan = (2S)-3-(1H-indol-3-yl)-2-isocyanopropanoate + hydroxyacetone + formaldehyde + phosphate + H2O + H(+). Functionally, involved in the biosynthesis of ambiguines, a family of hapalindole-type alkaloids. Responsible for the synthesis of the isonitrile group on tryptophan using ribulose 5-phosphate as the source of the carbon atom. The protein is L-tryptophan isonitrile synthase AmbI1 of Fischerella ambigua (strain UTEX 1903).